A 434-amino-acid chain; its full sequence is Ribosomal protein uS12 methylthiotransferase RimO (434 aa).

The MTTase N-terminal domain maps to 9 to 125 (PAIFLLSLGC…VLAAIGAKYR (117 aa)). [4Fe-4S] cluster contacts are provided by cysteine 18, cysteine 54, cysteine 88, cysteine 149, cysteine 153, and cysteine 156. In terms of domain architecture, Radical SAM core spans 135-364 (LTPPHYAFLK…MELQEGISAS (230 aa)). One can recognise a TRAM domain in the interval 367-434 (RKLEGQTLKV…AYELFGRISG (68 aa)).

The protein belongs to the methylthiotransferase family. RimO subfamily. The cofactor is [4Fe-4S] cluster.

It is found in the cytoplasm. The catalysed reaction is L-aspartate(89)-[ribosomal protein uS12]-hydrogen + (sulfur carrier)-SH + AH2 + 2 S-adenosyl-L-methionine = 3-methylsulfanyl-L-aspartate(89)-[ribosomal protein uS12]-hydrogen + (sulfur carrier)-H + 5'-deoxyadenosine + L-methionine + A + S-adenosyl-L-homocysteine + 2 H(+). In terms of biological role, catalyzes the methylthiolation of an aspartic acid residue of ribosomal protein uS12. The protein is Ribosomal protein uS12 methylthiotransferase RimO of Chlorobaculum tepidum (strain ATCC 49652 / DSM 12025 / NBRC 103806 / TLS) (Chlorobium tepidum).